The chain runs to 301 residues: MKTKAGFVALIGKPNAGKSTLLNTLLNAHLALVSHKANATRKLMKCIVPFKDKEGYESQIIFLDTPGLHHQEKLLNQCMLSQALKAMGDAELCVFLASVHDDLKGYEEFLNLCQKPHILALSKIDTATHKQVLQKLQEYQKYSSQFLDLVPLSAKKSQNLNTLLECISKYLSPSAWLFEKDLMSDEKMRDIYKEIIRESLFDFLSDEIPYESDVMIDKFIEEERIDKVYAHIIVEKESQKKIVIGKNGVNIKRIGTNARLKMQEVGEKKVFLNLQVIAQKSWSKEEKSLQKLGYIHQRKRD.

Residues 4–173 (KAGFVALIGK…LECISKYLSP (170 aa)) form the Era-type G domain. The G1 stretch occupies residues 12–19 (GKPNAGKS). A GTP-binding site is contributed by 12–19 (GKPNAGKS). A G2 region spans residues 38 to 42 (NATRK). The interval 64–67 (DTPG) is G3. GTP-binding positions include 64–68 (DTPGL) and 122–125 (SKID). The tract at residues 122–125 (SKID) is G4. The interval 152–154 (LSA) is G5. Residues 204-280 (LSDEIPYESD…FLNLQVIAQK (77 aa)) enclose the KH type-2 domain.

It belongs to the TRAFAC class TrmE-Era-EngA-EngB-Septin-like GTPase superfamily. Era GTPase family. As to quaternary structure, monomer.

It is found in the cytoplasm. The protein resides in the cell inner membrane. Its function is as follows. An essential GTPase that binds both GDP and GTP, with rapid nucleotide exchange. Plays a role in 16S rRNA processing and 30S ribosomal subunit biogenesis and possibly also in cell cycle regulation and energy metabolism. The chain is GTPase Era from Helicobacter pylori (strain G27).